The sequence spans 211 residues: tRNA (guanine-N(7)-)-methyltransferase (211 aa).

Residues Glu-43, Glu-68, Asn-95, and Asp-117 each coordinate S-adenosyl-L-methionine. Residue Asp-117 is part of the active site. Residues Lys-121, Asp-153, and 190–193 (TEYE) contribute to the substrate site.

It belongs to the class I-like SAM-binding methyltransferase superfamily. TrmB family.

The catalysed reaction is guanosine(46) in tRNA + S-adenosyl-L-methionine = N(7)-methylguanosine(46) in tRNA + S-adenosyl-L-homocysteine. The protein operates within tRNA modification; N(7)-methylguanine-tRNA biosynthesis. Its function is as follows. Catalyzes the formation of N(7)-methylguanine at position 46 (m7G46) in tRNA. This is tRNA (guanine-N(7)-)-methyltransferase from Alkaliphilus oremlandii (strain OhILAs) (Clostridium oremlandii (strain OhILAs)).